The chain runs to 689 residues: UvrABC system protein C (689 aa).

Over residues 1–19 the composition is skewed to polar residues; the sequence is MTSDSSDTAKQIGSGQPSG. Residues 1-59 are disordered; sequence MTSDSSDTAKQIGSGQPSGSPADMRRRDGVAPEQEVDPASLETDEDDEARLPDLPDEPV. Residues 42-59 show a composition bias toward acidic residues; that stretch reads ETDEDDEARLPDLPDEPV. The region spanning 83 to 161 is the GIY-YIG domain; it reads TSPGVYRMMN…IKQLRPRFNV (79 aa). A UVR domain is found at 271 to 306; the sequence is RAVKEDLARAMEQAAADLAFERAALYRDRLAALSAI.

This sequence belongs to the UvrC family. In terms of assembly, interacts with UvrB in an incision complex.

Its subcellular location is the cytoplasm. The UvrABC repair system catalyzes the recognition and processing of DNA lesions. UvrC both incises the 5' and 3' sides of the lesion. The N-terminal half is responsible for the 3' incision and the C-terminal half is responsible for the 5' incision. This Nitrobacter winogradskyi (strain ATCC 25391 / DSM 10237 / CIP 104748 / NCIMB 11846 / Nb-255) protein is UvrABC system protein C.